The chain runs to 309 residues: 2-phosphoglycerate kinase (309 aa).

Residues 5-92 (NDIIVRGKSY…LWRMVLGRRP (88 aa)) enclose the ATP-cone domain.

It belongs to the 2-phosphoglycerate kinase family. The cofactor is a divalent metal cation.

It carries out the reaction (2R)-2-phosphoglycerate + ATP = (2R)-2,3-bisphosphoglycerate + ADP + H(+). It participates in thermoadapter biosynthesis; cyclic 2,3-diphosphoglycerate biosynthesis; cyclic 2,3-diphosphoglycerate from 2-phospho-D-glycerate: step 1/2. Catalyzes the phosphorylation of 2-phosphoglycerate to 2,3-diphosphoglycerate. Involved in the biosynthesis of cyclic 2,3-bisphosphoglycerate, a thermoprotectant. In Methanocaldococcus jannaschii (strain ATCC 43067 / DSM 2661 / JAL-1 / JCM 10045 / NBRC 100440) (Methanococcus jannaschii), this protein is 2-phosphoglycerate kinase.